Consider the following 203-residue polypeptide: ATP phosphoribosyltransferase (203 aa).

It belongs to the ATP phosphoribosyltransferase family. Short subfamily. As to quaternary structure, heteromultimer composed of HisG and HisZ subunits.

It localises to the cytoplasm. It carries out the reaction 1-(5-phospho-beta-D-ribosyl)-ATP + diphosphate = 5-phospho-alpha-D-ribose 1-diphosphate + ATP. It functions in the pathway amino-acid biosynthesis; L-histidine biosynthesis; L-histidine from 5-phospho-alpha-D-ribose 1-diphosphate: step 1/9. Catalyzes the condensation of ATP and 5-phosphoribose 1-diphosphate to form N'-(5'-phosphoribosyl)-ATP (PR-ATP). Has a crucial role in the pathway because the rate of histidine biosynthesis seems to be controlled primarily by regulation of HisG enzymatic activity. This chain is ATP phosphoribosyltransferase, found in Campylobacter fetus subsp. fetus (strain 82-40).